A 712-amino-acid chain; its full sequence is Diacylglycerol kinase 2 (712 aa).

Phorbol-ester/DAG-type zinc fingers lie at residues His-72–Cys-133 and Arg-145–Cys-208. One can recognise a DAGKc domain in the interval Pro-338–Ser-479.

The protein belongs to the eukaryotic diacylglycerol kinase family. In terms of assembly, monomer. In terms of tissue distribution, expressed in rosette and cauline leaves, flowers, siliques and roots. Highly expressed in young leaves and at lower levels in older leaves. In young seedlings, expressed at the root-shoot junction zone and vascular bundles of the cotyledons. In older plants, expressed in root tip, central cylinder, root hair, leaf mesophyll cells and guard cells, sepals, filaments of the anthers, stigma, valves of young and early adult siliques and hilum of seeds.

The protein localises to the endoplasmic reticulum. The catalysed reaction is a 1,2-diacyl-sn-glycerol + ATP = a 1,2-diacyl-sn-glycero-3-phosphate + ADP + H(+). It catalyses the reaction 1-octadecanoyl-2-(5Z,8Z,11Z,14Z-eicosatetraenoyl)-sn-glycerol + ATP = 1-octadecanoyl-2-(5Z,8Z,11Z,14Z-eicosatetraenoyl)-sn-glycero-3-phosphate + ADP + H(+). The enzyme catalyses 1,2-di-(9Z-octadecenoyl)-sn-glycerol + ATP = 1,2-di-(9Z-octadecenoyl)-sn-glycero-3-phosphate + ADP + H(+). Its function is as follows. Phosphorylates the second messenger diacylglycerol (DAG) to generate phosphatidic acid (PA), another important signaling molecule. PA is required for plant development and responses to abiotic stress and pathogen attack. May be involved in the accumulation of PA during cold stress. Involved in response to freezing stress by modulating the accumulation of PA. Exhibits high specificity for the unsaturated DAG analogs 1-stearoyl-2-arachidonoyl-sn-glycerol (1,2-SAG) and 1,2-dioleoyl-sn-glycerol (1,2-DOG). Exhibits high specificity for 1-palmitoyl, 2-oleoyl-sn-glycerol (1,2 POG), 1-stearoyl, 2-linoleoyl-sn-glycerol (1,2-SLG) and 1-oleoyl, 2-palmitoyl-sn-glycerol (1,2-OPG). Has almost no activity toward 1,2-dioctanoyl-sn-glycerol (1,2-DOCG), 1,2-dipalmitoyl-sn-glycerol (1,2-DPG), 1,2-dimyristoyl-sn-glycerol (1,2-DMG) and 1-oleoyl-2-acetyl-sn-glycerol (1,2-OAG). Functions together with DGK4 in male gametophyte development and biosynthesis of phosphatidylglycerol and phosphatidylinositol in the endoplasmic reticulum (ER). Involved in PA production for pollen grain growth, as well as leaf and root growth. The sequence is that of Diacylglycerol kinase 2 from Arabidopsis thaliana (Mouse-ear cress).